We begin with the raw amino-acid sequence, 235 residues long: Phosphoribosylaminoimidazole-succinocarboxamide synthase (235 aa).

The protein belongs to the SAICAR synthetase family.

The catalysed reaction is 5-amino-1-(5-phospho-D-ribosyl)imidazole-4-carboxylate + L-aspartate + ATP = (2S)-2-[5-amino-1-(5-phospho-beta-D-ribosyl)imidazole-4-carboxamido]succinate + ADP + phosphate + 2 H(+). It functions in the pathway purine metabolism; IMP biosynthesis via de novo pathway; 5-amino-1-(5-phospho-D-ribosyl)imidazole-4-carboxamide from 5-amino-1-(5-phospho-D-ribosyl)imidazole-4-carboxylate: step 1/2. This Lachnoclostridium phytofermentans (strain ATCC 700394 / DSM 18823 / ISDg) (Clostridium phytofermentans) protein is Phosphoribosylaminoimidazole-succinocarboxamide synthase.